Here is a 197-residue protein sequence, read N- to C-terminus: Probable GTP-binding protein EngB (197 aa).

An EngB-type G domain is found at 22 to 194 (DLPEIAFAGR…LETIARMTGI (173 aa)). Residues 30 to 37 (GRSNVGKS), 57 to 61 (GKTRL), 75 to 78 (DLPG), 142 to 145 (TKAD), and 173 to 175 (FST) contribute to the GTP site. Residues S37 and T59 each coordinate Mg(2+).

It belongs to the TRAFAC class TrmE-Era-EngA-EngB-Septin-like GTPase superfamily. EngB GTPase family. Requires Mg(2+) as cofactor.

Necessary for normal cell division and for the maintenance of normal septation. The sequence is that of Probable GTP-binding protein EngB from Desulfosudis oleivorans (strain DSM 6200 / JCM 39069 / Hxd3) (Desulfococcus oleovorans).